The following is a 429-amino-acid chain: Guanine nucleotide-binding protein subunit alpha (429 aa).

The N-myristoyl glycine moiety is linked to residue G2. C3 carries S-palmitoyl cysteine lipidation. One can recognise a G-alpha domain in the interval 40–429 (KGVKLLLLGA…QQNLKKSGIM (390 aa)). The tract at residues 43–56 (KLLLLGAGESGKST) is G1 motif. Positions 51, 52, 53, 54, 55, and 56 each coordinate GTP. S55 provides a ligand contact to Mg(2+). A not present in other G-proteins region spans residues 125–197 (LKQIDADVAG…KDSEQFTRLS (73 aa)). The segment at 249-257 (DILKGRIKT) is G2 motif. Residues L251, T257, G279, N345, K346, D348, and A401 each coordinate GTP. T257 contacts Mg(2+). The tract at residues 272 to 281 (FKVLDAGGQR) is G3 motif. The interval 341–348 (ILFLNKID) is G4 motif. Residues 399–404 (TCATDS) are G5 motif.

Belongs to the G-alpha family. G(q) subfamily. As to quaternary structure, g proteins are composed of 3 units; alpha, beta and gamma. The alpha chain contains the guanine nucleotide binding site. Mg(2+) is required as a cofactor.

Functionally, guanine nucleotide-binding proteins (G proteins) are involved as modulators or transducers in various transmembrane signaling systems. Involved in the mating pathway. The sequence is that of Guanine nucleotide-binding protein subunit alpha (CAG1) from Candida albicans (strain WO-1) (Yeast).